The sequence spans 148 residues: MSIVLKIKRTEDAKDLPLPAYMSEGAAGMDLYANVKGEVTINPGEVELIPTGIQIELPPNYEAQIRPRSGLALNYGITLLNTPGTVDSDYRGEIKLIVINLGKQPVTIKRGQRIAQMVINQVVRPKIIEVEELSETERMDRGFGHTGV.

Residues 68 to 70 (RSG), asparagine 81, 85 to 87 (TVD), and lysine 95 each bind substrate.

This sequence belongs to the dUTPase family. Mg(2+) is required as a cofactor.

It catalyses the reaction dUTP + H2O = dUMP + diphosphate + H(+). It participates in pyrimidine metabolism; dUMP biosynthesis; dUMP from dCTP (dUTP route): step 2/2. In terms of biological role, this enzyme is involved in nucleotide metabolism: it produces dUMP, the immediate precursor of thymidine nucleotides and it decreases the intracellular concentration of dUTP so that uracil cannot be incorporated into DNA. The chain is Deoxyuridine 5'-triphosphate nucleotidohydrolase from Caldanaerobacter subterraneus subsp. tengcongensis (strain DSM 15242 / JCM 11007 / NBRC 100824 / MB4) (Thermoanaerobacter tengcongensis).